We begin with the raw amino-acid sequence, 251 residues long: Imidazole glycerol phosphate synthase subunit HisF (251 aa).

Catalysis depends on residues Asp11 and Asp130.

This sequence belongs to the HisA/HisF family. Heterodimer of HisH and HisF.

The protein resides in the cytoplasm. The enzyme catalyses 5-[(5-phospho-1-deoxy-D-ribulos-1-ylimino)methylamino]-1-(5-phospho-beta-D-ribosyl)imidazole-4-carboxamide + L-glutamine = D-erythro-1-(imidazol-4-yl)glycerol 3-phosphate + 5-amino-1-(5-phospho-beta-D-ribosyl)imidazole-4-carboxamide + L-glutamate + H(+). It functions in the pathway amino-acid biosynthesis; L-histidine biosynthesis; L-histidine from 5-phospho-alpha-D-ribose 1-diphosphate: step 5/9. In terms of biological role, IGPS catalyzes the conversion of PRFAR and glutamine to IGP, AICAR and glutamate. The HisF subunit catalyzes the cyclization activity that produces IGP and AICAR from PRFAR using the ammonia provided by the HisH subunit. The protein is Imidazole glycerol phosphate synthase subunit HisF of Metallosphaera sedula (strain ATCC 51363 / DSM 5348 / JCM 9185 / NBRC 15509 / TH2).